An 834-amino-acid chain; its full sequence is Glycerol-3-phosphate acyltransferase (834 aa).

The HXXXXD motif motif lies at 309 to 314 (CHRSHI).

This sequence belongs to the GPAT/DAPAT family.

The protein localises to the cell inner membrane. It carries out the reaction sn-glycerol 3-phosphate + an acyl-CoA = a 1-acyl-sn-glycero-3-phosphate + CoA. It participates in phospholipid metabolism; CDP-diacylglycerol biosynthesis; CDP-diacylglycerol from sn-glycerol 3-phosphate: step 1/3. This is Glycerol-3-phosphate acyltransferase from Pseudomonas aeruginosa (strain LESB58).